The following is a 525-amino-acid chain: Mitochondrial-processing peptidase subunit alpha (525 aa).

A mitochondrion-targeting transit peptide spans 1-33 (MAAVVLAATRLLRGSGSWGCSRLRFGPPAYRRF). K64 is modified (N6-succinyllysine). K299 bears the N6-acetyllysine mark.

Belongs to the peptidase M16 family. As to quaternary structure, heterodimer of PMPCA (alpha) and PMPCB (beta) subunits, forming the mitochondrial processing protease (MPP) in which PMPCA is involved in substrate recognition and binding and PMPCB is the catalytic subunit. Ubiquitously expressed with highest expression in fetal tissues and adult brain, cerebellum and cerebellar vermis.

It localises to the mitochondrion matrix. The protein localises to the mitochondrion inner membrane. In terms of biological role, substrate recognition and binding subunit of the essential mitochondrial processing protease (MPP), which cleaves the mitochondrial sequence off newly imported precursors proteins. In Homo sapiens (Human), this protein is Mitochondrial-processing peptidase subunit alpha (PMPCA).